The sequence spans 828 residues: DNA gyrase subunit A (828 aa).

Residues 32–497 (LPDVRDGLKP…EVLSLEDEDL (466 aa)) enclose the Topo IIA-type catalytic domain. Y120 acts as the O-(5'-phospho-DNA)-tyrosine intermediate in catalysis. Positions 524–530 (QKRGGRG) match the GyrA-box motif.

It belongs to the type II topoisomerase GyrA/ParC subunit family. Heterotetramer, composed of two GyrA and two GyrB chains. In the heterotetramer, GyrA contains the active site tyrosine that forms a transient covalent intermediate with DNA, while GyrB binds cofactors and catalyzes ATP hydrolysis.

It is found in the cytoplasm. The enzyme catalyses ATP-dependent breakage, passage and rejoining of double-stranded DNA.. Its function is as follows. A type II topoisomerase that negatively supercoils closed circular double-stranded (ds) DNA in an ATP-dependent manner to modulate DNA topology and maintain chromosomes in an underwound state. Negative supercoiling favors strand separation, and DNA replication, transcription, recombination and repair, all of which involve strand separation. Also able to catalyze the interconversion of other topological isomers of dsDNA rings, including catenanes and knotted rings. Type II topoisomerases break and join 2 DNA strands simultaneously in an ATP-dependent manner. In Streptococcus pyogenes serotype M18 (strain MGAS8232), this protein is DNA gyrase subunit A.